A 316-amino-acid polypeptide reads, in one-letter code: tRNA dimethylallyltransferase (316 aa).

17-24 (GPTASGKT) is a binding site for ATP. 19-24 (TASGKT) contributes to the substrate binding site. 4 interaction with substrate tRNA regions span residues 42-45 (DSAL), 166-170 (QRLSR), 247-252 (RCVGYR), and 280-287 (KRQITWLR).

The protein belongs to the IPP transferase family. In terms of assembly, monomer. Mg(2+) serves as cofactor.

It catalyses the reaction adenosine(37) in tRNA + dimethylallyl diphosphate = N(6)-dimethylallyladenosine(37) in tRNA + diphosphate. Catalyzes the transfer of a dimethylallyl group onto the adenine at position 37 in tRNAs that read codons beginning with uridine, leading to the formation of N6-(dimethylallyl)adenosine (i(6)A). The sequence is that of tRNA dimethylallyltransferase from Escherichia fergusonii (strain ATCC 35469 / DSM 13698 / CCUG 18766 / IAM 14443 / JCM 21226 / LMG 7866 / NBRC 102419 / NCTC 12128 / CDC 0568-73).